The chain runs to 200 residues: MARYTGPTWKISRRLGISLSGTGKELQKRPYAPGQHGPNQRKKLSEYGLQLQEKQKLRHMYGVNERQFRRIFNDAGKMAGIHGENFMILLESRLDNLVYRMGLARTRRAARQLVNHGHITVDGQRVDIPSYRVKPGQVIGVREKSRNLQVIKESLESNDFVPAYVTFDADKLEGTYSRFPERSELPAEITEALIVEFYSR.

Positions threonine 22 to arginine 41 are disordered. Residues serine 92–lysine 152 enclose the S4 RNA-binding domain.

It belongs to the universal ribosomal protein uS4 family. In terms of assembly, part of the 30S ribosomal subunit. Contacts protein S5. The interaction surface between S4 and S5 is involved in control of translational fidelity.

Its function is as follows. One of the primary rRNA binding proteins, it binds directly to 16S rRNA where it nucleates assembly of the body of the 30S subunit. Functionally, with S5 and S12 plays an important role in translational accuracy. The polypeptide is Small ribosomal subunit protein uS4 (Halalkalibacterium halodurans (strain ATCC BAA-125 / DSM 18197 / FERM 7344 / JCM 9153 / C-125) (Bacillus halodurans)).